A 185-amino-acid polypeptide reads, in one-letter code: Peptidyl-tRNA hydrolase (185 aa).

Y14 contributes to the tRNA binding site. H19 acts as the Proton acceptor in catalysis. TRNA is bound by residues F64, N66, and N112.

This sequence belongs to the PTH family. In terms of assembly, monomer.

The protein resides in the cytoplasm. It catalyses the reaction an N-acyl-L-alpha-aminoacyl-tRNA + H2O = an N-acyl-L-amino acid + a tRNA + H(+). In terms of biological role, hydrolyzes ribosome-free peptidyl-tRNAs (with 1 or more amino acids incorporated), which drop off the ribosome during protein synthesis, or as a result of ribosome stalling. Catalyzes the release of premature peptidyl moieties from peptidyl-tRNA molecules trapped in stalled 50S ribosomal subunits, and thus maintains levels of free tRNAs and 50S ribosomes. This chain is Peptidyl-tRNA hydrolase, found in Lacticaseibacillus paracasei (strain ATCC 334 / BCRC 17002 / CCUG 31169 / CIP 107868 / KCTC 3260 / NRRL B-441) (Lactobacillus paracasei).